We begin with the raw amino-acid sequence, 488 residues long: Bifunctional protein HldE (488 aa).

The tract at residues 1 to 327 is ribokinase; the sequence is MDDTLAKLPR…GLAHGEHADP (327 aa). Residue 201–204 coordinates ATP; that stretch reads NRRE. Aspartate 272 is a catalytic residue. The segment at 354–488 is cytidylyltransferase; it reads FTNGCFDLLH…GRMNAPAVGG (135 aa).

This sequence in the N-terminal section; belongs to the carbohydrate kinase PfkB family. The protein in the C-terminal section; belongs to the cytidylyltransferase family. In terms of assembly, homodimer.

It carries out the reaction D-glycero-beta-D-manno-heptose 7-phosphate + ATP = D-glycero-beta-D-manno-heptose 1,7-bisphosphate + ADP + H(+). The enzyme catalyses D-glycero-beta-D-manno-heptose 1-phosphate + ATP + H(+) = ADP-D-glycero-beta-D-manno-heptose + diphosphate. It participates in nucleotide-sugar biosynthesis; ADP-L-glycero-beta-D-manno-heptose biosynthesis; ADP-L-glycero-beta-D-manno-heptose from D-glycero-beta-D-manno-heptose 7-phosphate: step 1/4. It functions in the pathway nucleotide-sugar biosynthesis; ADP-L-glycero-beta-D-manno-heptose biosynthesis; ADP-L-glycero-beta-D-manno-heptose from D-glycero-beta-D-manno-heptose 7-phosphate: step 3/4. Its function is as follows. Catalyzes the phosphorylation of D-glycero-D-manno-heptose 7-phosphate at the C-1 position to selectively form D-glycero-beta-D-manno-heptose-1,7-bisphosphate. Catalyzes the ADP transfer from ATP to D-glycero-beta-D-manno-heptose 1-phosphate, yielding ADP-D-glycero-beta-D-manno-heptose. In Caulobacter sp. (strain K31), this protein is Bifunctional protein HldE.